The chain runs to 515 residues: GMP synthase [glutamine-hydrolyzing] (515 aa).

The region spanning 10–200 is the Glutamine amidotransferase type-1 domain; that stretch reads TIIVLDFGSQ…VFGVCGCSEG (191 aa). Residue cysteine 87 is the Nucleophile of the active site. Active-site residues include histidine 174 and glutamate 176. Positions 201–390 constitute a GMPS ATP-PPase domain; that stretch reads WNMENFIEVE…LGIPDEIVWR (190 aa). Residue 228–234 coordinates ATP; the sequence is SGGVDSS.

In terms of assembly, homodimer.

It catalyses the reaction XMP + L-glutamine + ATP + H2O = GMP + L-glutamate + AMP + diphosphate + 2 H(+). The protein operates within purine metabolism; GMP biosynthesis; GMP from XMP (L-Gln route): step 1/1. Functionally, catalyzes the synthesis of GMP from XMP. In Bacillus cereus (strain ATCC 14579 / DSM 31 / CCUG 7414 / JCM 2152 / NBRC 15305 / NCIMB 9373 / NCTC 2599 / NRRL B-3711), this protein is GMP synthase [glutamine-hydrolyzing].